We begin with the raw amino-acid sequence, 539 residues long: MSKYVDLTGKPFHFIGIGGIGMSALAYILAKRKLPTYGSDIKSSHITRRLEAIGAHIFWHQEAKNLELFQQTTEEQNLFLSNNSSLNLSQFTPCISLGEVTTKKHNVKLENHKGISQLPQVVCSTAINTTNSEYKAAVELGCPIFHRSDLLAALIQDYQSIAVAGTHGKTTTSSLIGFMLLEAGLDPTIVIGGEVDAWGGNARLGRSPYLVAEADESDGSLVKLSAHIGVVTNIELDHPDHYDSLDQVVEIFQVFKENCQNLVGCIDCSTVREKLQPTISYSINFESDAHYKVDCVHYQSNVTLARVWEKGQILGQLKLRLLGKHNLSNALAAVAVGRLLGLEFSTITSAIALFEGAHRRFEYRGECNGIVFVDDYAHHPSEINATLAAANLQKNQELSPKPHISTKKLTLKTQNNSLKIERVVAIFQPHRYSRTQAFISEFAQSFNDADMVIVTNIYSAGESSEGQINSQQVAEAISRYHRQVYYRSSLDSVSKFLYQVLKPGDLAIFLSAGNLNQIIPELMARYQQPHYQVKSCEIA.

Position 165–171 (165–171) interacts with ATP; the sequence is GTHGKTT.

The protein belongs to the MurCDEF family.

It is found in the cytoplasm. It carries out the reaction UDP-N-acetyl-alpha-D-muramate + L-alanine + ATP = UDP-N-acetyl-alpha-D-muramoyl-L-alanine + ADP + phosphate + H(+). The protein operates within cell wall biogenesis; peptidoglycan biosynthesis. Functionally, cell wall formation. The chain is UDP-N-acetylmuramate--L-alanine ligase from Trichodesmium erythraeum (strain IMS101).